Here is a 250-residue protein sequence, read N- to C-terminus: 2-(R)-hydroxypropyl-CoM dehydrogenase (250 aa).

NAD(+)-binding positions include 12–14 (SGN), Asp-33, 60–61 (DV), and Asn-87. 2-oxopropyl-coenzyme M is bound at residue Arg-152. Catalysis depends on Tyr-155, which acts as the Proton acceptor. Position 188-192 (188-192 (IETPM)) interacts with NAD(+). 195–196 (WR) is a 2-oxopropyl-coenzyme M binding site.

It belongs to the short-chain dehydrogenases/reductases (SDR) family. As to quaternary structure, homodimer in solution. Homotetramer. Component III of the aliphatic epoxide carboxylation complex together with components I, II and IV.

The catalysed reaction is (R)-2-hydroxypropyl-coenzyme M + NAD(+) = 2-oxopropyl-coenzyme M + NADH + H(+). The protein operates within alkene metabolism; propylene degradation. With respect to regulation, inhibited by the arginine-specific modifiers 2,3-butanedione and phenylglyoxal. 2-(2-methyl-2-hydroxypropylthio)ethanesulfonate (M-HPC), an achiral analog of both R-HPC and S-HPC, and (2S)-2-hydroxypropyl-coenzyme M (S-HPC) are competitive inhibitors. Inhibited (at 70%) by the coenzyme M analog 2-bromoethanesulfonate (BES). Its function is as follows. Involved in aliphatic epoxide carboxylation. Catalyzes the reversible oxidation of (R)-2-hydroxypropyl-coenzyme M (R-HPC) to 2-oxopropyl-coenzyme M (2-KPC). The enzyme is highly specific for the R enantiomers. In vitro can also use achiral 2-propanol and short-chain (R)- and (S)-2-alkanols. This Xanthobacter autotrophicus (strain ATCC BAA-1158 / Py2) protein is 2-(R)-hydroxypropyl-CoM dehydrogenase.